The following is a 278-amino-acid chain: 4-deoxy-L-threo-5-hexosulose-uronate ketol-isomerase (278 aa).

Residues His-196, His-198, Glu-203, and His-245 each coordinate Zn(2+).

This sequence belongs to the KduI family. As to quaternary structure, homohexamer. It depends on Zn(2+) as a cofactor.

It carries out the reaction 5-dehydro-4-deoxy-D-glucuronate = 3-deoxy-D-glycero-2,5-hexodiulosonate. Its pathway is glycan metabolism; pectin degradation; 2-dehydro-3-deoxy-D-gluconate from pectin: step 4/5. Functionally, catalyzes the isomerization of 5-dehydro-4-deoxy-D-glucuronate to 3-deoxy-D-glycero-2,5-hexodiulosonate. The sequence is that of 4-deoxy-L-threo-5-hexosulose-uronate ketol-isomerase from Escherichia coli (strain 55989 / EAEC).